The sequence spans 259 residues: Activator of lactoyl-CoA dehydratase (259 aa).

Residues Cys125 and Cys164 each contribute to the [4Fe-4S] cluster site.

Homodimer. [4Fe-4S] cluster serves as cofactor.

Functionally, required for the activation of lactoyl-CoA dehydratase. This protein is extremely sensitive towards oxygen. This is Activator of lactoyl-CoA dehydratase (lcdC) from Anaerotignum propionicum (Clostridium propionicum).